A 331-amino-acid chain; its full sequence is UDP-GalNAc:beta-1,3-N-acetylgalactosaminyltransferase 1 (331 aa).

The Cytoplasmic segment spans residues Met-1 to Trp-20. Residues Ser-21–Val-43 form a helical; Signal-anchor for type II membrane protein membrane-spanning segment. The Lumenal portion of the chain corresponds to Ile-44–Tyr-331. Asn-72, Asn-154, Asn-198, Asn-212, and Asn-326 each carry an N-linked (GlcNAc...) asparagine glycan.

Belongs to the glycosyltransferase 31 family. The cofactor is Mg(2+).

The protein resides in the golgi apparatus membrane. It carries out the reaction a globoside Gb3Cer (d18:1(4E)) + UDP-N-acetyl-alpha-D-galactosamine = a globoside Gb4Cer (d18:1(4E)) + UDP + H(+). The protein operates within protein modification; protein glycosylation. Transfers N-acetylgalactosamine onto globotriaosylceramide. Plays a critical role in preimplantation stage embryonic development. The sequence is that of UDP-GalNAc:beta-1,3-N-acetylgalactosaminyltransferase 1 (B3GALNT1) from Pongo abelii (Sumatran orangutan).